Here is a 529-residue protein sequence, read N- to C-terminus: Phenylalanine N-monooxygenase (529 aa).

A helical membrane pass occupies residues 1-21 (MLDSTPMLAFIIGLLLLALTM). Cys-467 is a binding site for heme.

It belongs to the cytochrome P450 family. Requires heme as cofactor.

The protein resides in the endoplasmic reticulum membrane. The enzyme catalyses L-phenylalanine + 2 reduced [NADPH--hemoprotein reductase] + 2 O2 = (E)-phenylacetaldehyde oxime + 2 oxidized [NADPH--hemoprotein reductase] + CO2 + 3 H2O + 2 H(+). It participates in secondary metabolite biosynthesis; phenylglucosinolate biosynthesis. In terms of biological role, converts L-phenylalanine into phenylacetaldoxime, the precursor of benzylglucosinolate (glucotropeolin). This is Phenylalanine N-monooxygenase (CYP79A2) from Arabidopsis thaliana (Mouse-ear cress).